A 454-amino-acid chain; its full sequence is Glycosyl hydrolase family 109 protein (454 aa).

A signal peptide (tat-type signal) is located at residues 1–29; sequence MFAMKRREFIAASAAVAASSLLPQTPAWA. NAD(+) contacts are provided by residues 43 to 44, aspartate 65, 116 to 119, 136 to 137, and asparagine 165; these read MR, WEYH, and EV. Tyrosine 194 is a binding site for substrate. 224–228 is a binding site for NAD(+); it reads SEARW. Substrate is bound by residues arginine 229, 241-244, and tyrosine 324; that span reads YPSH. Tyrosine 241 lines the NAD(+) pocket.

The protein belongs to the Gfo/Idh/MocA family. Glycosyl hydrolase 109 subfamily. The cofactor is NAD(+). In terms of processing, predicted to be exported by the Tat system. The position of the signal peptide cleavage has not been experimentally proven.

Its function is as follows. Glycosidase. The sequence is that of Glycosyl hydrolase family 109 protein from Stenotrophomonas maltophilia (strain K279a).